The following is a 183-amino-acid chain: Ribosome maturation factor RimM (183 aa).

The 82-residue stretch at Asp102–Phe183 folds into the PRC barrel domain.

This sequence belongs to the RimM family. In terms of assembly, binds ribosomal protein uS19.

It localises to the cytoplasm. In terms of biological role, an accessory protein needed during the final step in the assembly of 30S ribosomal subunit, possibly for assembly of the head region. Essential for efficient processing of 16S rRNA. May be needed both before and after RbfA during the maturation of 16S rRNA. It has affinity for free ribosomal 30S subunits but not for 70S ribosomes. In Saccharophagus degradans (strain 2-40 / ATCC 43961 / DSM 17024), this protein is Ribosome maturation factor RimM.